The primary structure comprises 279 residues: MCEYSKALHILLKSPVTDDIIKFLTDTTLRVVPSSNYPTPPGSPGEKHLTRLPSLMTFITRLVRYTNVYTPTLLTAACYLNKLKRILPRDATGLPSTIHRIFLACLILSAKFHNDSSPLNKHWARYTDGLFTLEDINLMERQLLQLLNWDLRVNTEDLILDLQPLLEPIKQDLARSSDQRKRINMMMSMNRRTCAGTSPIRSNNRFKLYEKQRNVSIASDLSSATLVDSCNDLRRLKDVTNIANNTVANTNYVRTVEKWNDNVNRQSWDLEQIMSQHGF.

Positions 19–152 constitute a Cyclin N-terminal domain; the sequence is DIIKFLTDTT…LLQLLNWDLR (134 aa). Residues 29 to 36 form a required for degradation by DMA1 region; sequence LRVVPSSN. Threonine 39 is subject to Phosphothreonine; by PHO85. Serine 43 bears the Phosphoserine; by PHO85 mark. Glycyl lysine isopeptide (Lys-Gly) (interchain with G-Cter in ubiquitin) cross-links involve residues lysine 82 and lysine 121.

Belongs to the cyclin family. PCL1,2 subfamily. In terms of assembly, forms a cyclin-CDK complex with PHO85. Interacts with HMS1, NCP1 and NPA3. Interacts with DMA1. Post-translationally, phosphorylated by PHO85; necessary for interaction with DMA1 and subsequent degradation. In terms of processing, ubiquitinated by E3 ubiquitin ligase DMA1 in response to nutrient condition; this targets PCL1 for destruction.

The protein localises to the cytoplasm. The protein resides in the nucleus. Functionally, G1/S-specific cyclin partner of the cyclin-dependent kinase (CDK) PHO85. Essential for the control of the cell cycle at the G1/S (start) transition. The PCL1-PHO85 cyclin-CDK holoenzyme is involved in phosphorylation of the CDK inhibitor (CKI) SIC1, which is required for its ubiquitination and degradation, releasing repression of b-type cyclins and promoting exit from mitosis. Together with cyclin PCL2, positively controls degradation of sphingoid long chain base kinase LCB4. PCL1-PHO85 phosphorylates LCB4, which is required for its ubiquitination and degradation. PCL1-PHO85 also phosphorylates HMS1, NCP1 and NPA3, which may all have a role in mitotic exit. In Saccharomyces cerevisiae (strain ATCC 204508 / S288c) (Baker's yeast), this protein is PHO85 cyclin-1.